The sequence spans 356 residues: Replication factor C subunit 3 (356 aa).

Lys20 carries the N6-acetyllysine modification. Ser125 bears the Phosphoserine mark.

This sequence belongs to the activator 1 small subunits family. Subunit of the RFC complex, an heteropentameric complex consisting of a large subunit RFC1 and four small subunits RFC2, RFC3, RFC4 and RFC5; the RFC complex interacts with PCNA. Forms an heterotetrameric complex with RFC2, RFC4 and RFC5; this complex has ATPase activity but is not stimulated by PCNA. The heterotetramer of subunits RFC2, RFC3, RFC4 and RFC5 interacts with RAD17. Interacts with CNTD1; this interaction facilitates crossover formation.

It localises to the nucleus. Its function is as follows. Subunit of the replication factor C (RFC) complex which acts during elongation of primed DNA templates by DNA polymerases delta and epsilon, and is necessary for ATP-dependent loading of proliferating cell nuclear antigen (PCNA) onto primed DNA. In Mus musculus (Mouse), this protein is Replication factor C subunit 3 (Rfc3).